A 525-amino-acid polypeptide reads, in one-letter code: uncharacterized protein (525 aa).

2 consecutive transmembrane segments (helical) span residues phenylalanine 28–isoleucine 48 and glycine 353–proline 373. The Pterin-binding domain occupies aspartate 146–phenylalanine 394.

It localises to the cell membrane. In terms of biological role, unknown. Does not possess dihydropteroate synthase (DHPS) activity since it does not catalyze the condensation of 6-hydroxymethyl-7,8-dihydropterin pyrophosphate (DHPP) and 4-aminobenzoate to form 7,8-dihydropteroate. This is an uncharacterized protein from Methanocaldococcus jannaschii (strain ATCC 43067 / DSM 2661 / JAL-1 / JCM 10045 / NBRC 100440) (Methanococcus jannaschii).